We begin with the raw amino-acid sequence, 150 residues long: Galectin-2 (150 aa).

Residues 9–141 (NQVKLQNDFK…FSSPVTVDVH (133 aa)) form the Galectin domain. Residues His-51, Arg-55, Asn-64, Glu-75, and Arg-77 each contribute to the a carbohydrate site.

In terms of assembly, homotetramer. Oligomerization is required for carbohydrate binding.

It localises to the secreted. Its subcellular location is the extracellular space. The protein localises to the extracellular matrix. It is found in the cell wall. The protein resides in the endomembrane system. In terms of biological role, binds lactose. May play a role in fruiting body formation. Displays toxicity towards the nematode C.elegans by binding to a specific Gal-beta-1,4-Fuc-alpha-1,6 modification of N-glycan cores on C.elegans intestinal cells. This chain is Galectin-2 (Cgl2), found in Coprinopsis cinerea (Inky cap fungus).